The following is a 327-amino-acid chain: Ribosomal RNA small subunit methyltransferase H (327 aa).

Residues 36-38 (GGH), aspartate 61, phenylalanine 88, aspartate 114, and glutamine 121 each bind S-adenosyl-L-methionine.

The protein belongs to the methyltransferase superfamily. RsmH family.

The protein resides in the cytoplasm. The enzyme catalyses cytidine(1402) in 16S rRNA + S-adenosyl-L-methionine = N(4)-methylcytidine(1402) in 16S rRNA + S-adenosyl-L-homocysteine + H(+). Specifically methylates the N4 position of cytidine in position 1402 (C1402) of 16S rRNA. The chain is Ribosomal RNA small subunit methyltransferase H from Chlorobium phaeovibrioides (strain DSM 265 / 1930) (Prosthecochloris vibrioformis (strain DSM 265)).